Here is a 105-residue protein sequence, read N- to C-terminus: Small ribosomal subunit protein uS10 (105 aa).

The protein belongs to the universal ribosomal protein uS10 family. As to quaternary structure, part of the 30S ribosomal subunit.

In terms of biological role, involved in the binding of tRNA to the ribosomes. The sequence is that of Small ribosomal subunit protein uS10 from Synechococcus elongatus (strain ATCC 33912 / PCC 7942 / FACHB-805) (Anacystis nidulans R2).